A 60-amino-acid polypeptide reads, in one-letter code: Metallothionein A (60 aa).

Positions 1–28 are beta; sequence MDPCDCSKSGTCNCGGSCTCTNCSCKSC. 20 residues coordinate a divalent metal cation: Cys4, Cys6, Cys12, Cys14, Cys18, Cys20, Cys23, Cys25, Cys28, Cys32, Cys33, Cys35, Cys36, Cys40, Cys43, Cys47, Cys49, Cys54, Cys58, and Cys59. Residues 29 to 60 are alpha; it reads KKSCCPCCPSGCTKCASGCVCKGKTCDTSCCQ.

This sequence belongs to the metallothionein superfamily. Type 1 family.

Functionally, metallothioneins have a high content of cysteine residues that bind various heavy metals. The chain is Metallothionein A (mta) from Chionodraco hamatus (Antarctic teleost icefish).